Reading from the N-terminus, the 202-residue chain is Endoribonuclease YbeY (202 aa).

3 residues coordinate Zn(2+): histidine 120, histidine 124, and histidine 130.

Belongs to the endoribonuclease YbeY family. Requires Zn(2+) as cofactor.

Its subcellular location is the cytoplasm. Single strand-specific metallo-endoribonuclease involved in late-stage 70S ribosome quality control and in maturation of the 3' terminus of the 16S rRNA. In Corynebacterium kroppenstedtii (strain DSM 44385 / JCM 11950 / CIP 105744 / CCUG 35717), this protein is Endoribonuclease YbeY.